The primary structure comprises 333 residues: Protoheme IX farnesyltransferase (333 aa).

Over residues 1–13 (MVSSTSQIISTSP) the composition is skewed to low complexity. The interval 1–21 (MVSSTSQIISTSPSRDDVVPS) is disordered. The next 8 membrane-spanning stretches (helical) occupy residues 38 to 58 (LIPL…GWPL), 63 to 83 (LACT…LNCL), 109 to 129 (AVFT…VSGV), 132 to 152 (LAAG…TAFL), 160 to 180 (IVIG…AATG), 188 to 208 (WLFA…AILL), 245 to 265 (CFGV…LVPF), and 286 to 306 (AKGL…LLVV).

This sequence belongs to the UbiA prenyltransferase family. Protoheme IX farnesyltransferase subfamily.

The protein localises to the cell inner membrane. It carries out the reaction heme b + (2E,6E)-farnesyl diphosphate + H2O = Fe(II)-heme o + diphosphate. The protein operates within porphyrin-containing compound metabolism; heme O biosynthesis; heme O from protoheme: step 1/1. Functionally, converts heme B (protoheme IX) to heme O by substitution of the vinyl group on carbon 2 of heme B porphyrin ring with a hydroxyethyl farnesyl side group. The polypeptide is Protoheme IX farnesyltransferase (Prochlorococcus marinus (strain SARG / CCMP1375 / SS120)).